The following is a 1623-amino-acid chain: ABC transporter C family member 2 (1623 aa).

A run of 9 helical transmembrane segments spans residues 37–57 (FVLGISQLVLLVLCLYRIWLA), 76–96 (FLALLAAYATAEPLFRLIMGI), 109–129 (FEAFGLGVKAFAWGAVMVMIL), 145–165 (FAVIYALVGDMVLLNLVLSVK), 172–192 (VLYLYTSEVGAQVLFGILLFM), 336–356 (AWMGYIYAFSIFVGVVFGVLC), 440–460 (VASLIGALLLVLMFPLQTVII), 527–547 (FILNSIPVLVTIVSFGVFTLL), and 557–577 (FTSLSLFAVLRFPLFMLPNII). The 281-residue stretch at 302–582 (FWWGGFWKIG…LPNIITQVVN (281 aa)) folds into the ABC transmembrane type-1 1 domain. The ABC transporter 1 domain occupies 614 to 838 (ISIRNGYFSW…GPLFQRLMEN (225 aa)). 649–656 (GSTGEGKT) is a binding site for ATP. The segment at 842-890 (VEEYSEENGEAEADQTAEQPVANGNTNGLQMDGSDDKKSKEGNKKGGKS) is disordered. Over residues 845-856 (YSEENGEAEADQ) the composition is skewed to acidic residues. Polar residues predominate over residues 857-870 (TAEQPVANGNTNGL). Residues 875–885 (SDDKKSKEGNK) are compositionally biased toward basic and acidic residues. 6 helical membrane-spanning segments follow: residues 914–934 (ALGGAWVVMMLLLCYVLTEVF), 955–975 (GPLFYNLIYALLSFGQVLVTL), 1032–1054 (AVFVNMFMGQVSQLLSTVVLIGI), 1058–1077 (LSLWAIMPLLVLFYGAYLYY), 1143–1163 (LGIRLETLGGLMIWLTASFAV), and 1177–1197 (STMGLLLSYALNITSLLTGVL). The ABC transmembrane type-1 2 domain occupies 921-1205 (VMMLLLCYVL…VLRLASLAEN (285 aa)). An interaction with calmodulin and FKP42/TWD1 region spans residues 1236 to 1251 (WPSSGSIKFEDVVLRY). Residues 1242 to 1476 (IKFEDVVLRY…EGSSFSKMVQ (235 aa)) form the ABC transporter 2 domain. 1276–1283 (GRTGAGKS) provides a ligand contact to ATP.

The protein belongs to the ABC transporter superfamily. ABCC family. Conjugate transporter (TC 3.A.1.208) subfamily. Interacts with FKBP42/TWD1 and probably with calmodulin (CaM). As to expression, ubiquitous, at low levels.

It is found in the vacuole membrane. The catalysed reaction is ATP + H2O + xenobioticSide 1 = ADP + phosphate + xenobioticSide 2.. Its activity is regulated as follows. Reciprocal promotion of DNP-GS and E(2)17betaG uptake. E(2)17betaG uptake is also stimulated by GSH and S-methyl-glutathione (S-methyl-GS), and, to a lower extent, by GSSG and C3G-GS. Metolachlor-GS and decyl-GS slightly inhibit E(2)17betaG uptake. In terms of biological role, pump for glutathione S-conjugates. Mediates the transport of S-conjugates such as GSH, S-(2,4-dinitrophenyl)-glutathione (DNP-GS), GSSG, cyanidin 3-glucoside-GS (C3G-GS) and metolachlor-GS (MOC-GS), glucuronides such as 17-beta-estradiol 17-(beta-D-glucuronide) (E(2)17betaG), and of the chlorophyll catabolite such as B.napus nonfluorescent chlorophyll catabolite (Bn-NCC-1). In Arabidopsis thaliana (Mouse-ear cress), this protein is ABC transporter C family member 2 (ABCC2).